The following is a 202-amino-acid chain: uncharacterized protein (202 aa).

Positions 1-20 (MVGAVTQIADRPTDPSPWSP) are disordered. Residues 19–79 (SPRETELLAV…AAFIEGIRQV (61 aa)) enclose the HTH tetR-type domain.

This is an uncharacterized protein from Mycobacterium bovis (strain ATCC BAA-935 / AF2122/97).